The primary structure comprises 310 residues: Carbamate kinase 1 (310 aa).

This sequence belongs to the carbamate kinase family.

Its subcellular location is the cytoplasm. It catalyses the reaction hydrogencarbonate + NH4(+) + ATP = carbamoyl phosphate + ADP + H2O + H(+). It participates in metabolic intermediate metabolism; carbamoyl phosphate degradation; CO(2) and NH(3) from carbamoyl phosphate: step 1/1. The chain is Carbamate kinase 1 (arcC1) from Staphylococcus aureus (strain bovine RF122 / ET3-1).